Reading from the N-terminus, the 156-residue chain is Small ribosomal subunit protein uS7 (156 aa).

It belongs to the universal ribosomal protein uS7 family. Part of the 30S ribosomal subunit. Contacts proteins S9 and S11.

Its function is as follows. One of the primary rRNA binding proteins, it binds directly to 16S rRNA where it nucleates assembly of the head domain of the 30S subunit. Is located at the subunit interface close to the decoding center, probably blocks exit of the E-site tRNA. This chain is Small ribosomal subunit protein uS7, found in Geobacter sp. (strain M21).